A 494-amino-acid chain; its full sequence is Splicing regulatory glutamine/lysine-rich protein 1 (494 aa).

The RRM domain maps to 69 to 145 (RTVYVGNLNS…RPLKINHSNN (77 aa)). Serine 174 and serine 187 each carry phosphoserine. The segment at 176–494 (ISAAIEPESG…ERLCSTADAV (319 aa)) is disordered. Residues 183–192 (ESGKSNERKG) are compositionally biased toward basic and acidic residues. Basic residues-rich tracts occupy residues 193-230 (GRSRSHTRSKSRSSSKSHSRRKRSQSKHRSRSHNRSRS) and 238-262 (SKSPHKKRSKSRERRKSRSRSRSRD). Over residues 263–340 (KRKDTREKVK…DRSKEADEKR (78 aa)) the composition is skewed to basic and acidic residues. Position 348 is a phosphothreonine (threonine 348). Residues 357–373 (RRSRSASRERRRRRSRS) are compositionally biased toward basic residues. 2 stretches are compositionally biased toward basic and acidic residues: residues 404–453 (REKE…KEAD) and 463–474 (KDTARTEEESKA).

This sequence belongs to the splicing factor SR family. In terms of assembly, interacts with SREK1IP1. Homodimer. Binds SFRS1, SFRS2, SFRS3 and SFRS6. Interacts with the spliceosome. Ubiquitous. Detected in liver, brain, lung, spleen, testis and pancreas.

The protein resides in the nucleus. Functionally, participates in the regulation of alternative splicing by modulating the activity of other splice facors. Inhibits the splicing activity of SFRS1, SFRS2 and SFRS6. Augments the splicing activity of SFRS3. In Rattus norvegicus (Rat), this protein is Splicing regulatory glutamine/lysine-rich protein 1 (Srek1).